The sequence spans 209 residues: Putative tripartite motif-containing protein 61 (209 aa).

The segment at 16–57 (CPICLDYLKDPVTISCGHNFCLSCIIMSWKDLHDSFPCPFCH) adopts an RING-type zinc-finger fold. A B box-type zinc finger spans residues 92–133 (EEKHVCKKHNQVLTFFCQKDLELLCPRCSLSTDHQHHCVWPI). 4 residues coordinate Zn(2+): cysteine 97, histidine 100, cysteine 119, and histidine 125.

In Homo sapiens (Human), this protein is Putative tripartite motif-containing protein 61 (TRIM61).